We begin with the raw amino-acid sequence, 900 residues long: MPGPSDDPTEIALQGNLFSDAEPTVSATGVEPSTACEAFSDMELTADAASRPRRRAPADHNAADHDSNTDESSDNSDDPAWAHHSQVDPQQLTPMLRHYVELKAAHPERVLLYRLGDFFECFFEDAITLSRLLELTLTGKEGGKAVGRVPMAGIPHHAAERYCGELIRRGFSVALCDQLETTPAKGALLKRDITRVLTPGTVLEEGMLSSRRNNWLAAVVIEPAHRDEPFRWGLASADVSTGEVQVMQRQDSDALHQQLAQLGAAELLSSTPESNPAWCPDQLRLTSVASTPFSRPAAEAALLRHYKLANLDGLGLPELPLALRAMGGLLAYLRDTQPLEENASVPLEVPAIVQRGDALVLDAQTRRNLELTATQRDGSLQGSLLWAIDRTLTAMGGRCLRRWLEAPLMDLDAIRQRQQLVSTLVEQRNLRQALRRLLRPMGDLERLAGRAGAGHAGARDLVAIADGLERLPQLAARLEGTIIRGPDWLDDLLQPDPALQDLASSIRHTLLESPPLSLSEGGLIHDGVDPLLDGLRNQLDDQDAWLSQQEKQERQRSGNSNLRLQYHRTFGYFLAVSKAKASAVPDHWIRRQTLANEERFITPALKEREGRIFQLRARACQREYELFCTLREQVGALAASIRRAARAVAGLDALTGLADTAASGAYCAPELVEGRALSLSEARHPVVEQLLVETRFTANDVHLGSGTDLVVLTGPNASGKSCYLRQIGLIQLLAQIGSWVPAAKARIGIADRIFTRVGAVDDLAAGQSTFMVEMAETANILHHATELSLVLLDEIGRGTATFDGLSIAWAVSEHLAGDLRARTVFATHYHELNNLANERANVANFQVLVEETGDDLLFLHRVSQGGASRSYGIEAARLAGVPTPVVQRARQVLDQIEAAA.

Positions 1–88 (MPGPSDDPTE…PAWAHHSQVD (88 aa)) are disordered. Residues 56 to 68 (APADHNAADHDSN) show a composition bias toward basic and acidic residues. 714 to 721 (GPNASGKS) provides a ligand contact to ATP.

Belongs to the DNA mismatch repair MutS family.

In terms of biological role, this protein is involved in the repair of mismatches in DNA. It is possible that it carries out the mismatch recognition step. This protein has a weak ATPase activity. The protein is DNA mismatch repair protein MutS of Parasynechococcus marenigrum (strain WH8102).